We begin with the raw amino-acid sequence, 704 residues long: Zinc finger CCHC domain-containing protein 8 (704 aa).

A2 bears the N-acetylalanine mark. Residues 16–33 are compositionally biased toward basic and acidic residues; that stretch reads FDHPEESIPEPVHTRFKD. A disordered region spans residues 16–43; it reads FDHPEESIPEPVHTRFKDDDEEDENGVG. A coiled-coil region spans residues 43-78; sequence GDAELRERLRQCEETIEQLRAENQELKRKLNILTRP. The CCHC-type zinc finger occupies 225-242; that stretch reads PHCFNCGSEEHQMKDCPM. RBM7 binding regions lie at residues 284 to 297 and 307 to 322; these read FKPG…QDAL and FIYR…GWLK. At T340 the chain carries Phosphothreonine. Disordered regions lie at residues 407–516 and 529–599; these read APGV…LTLE and LEQA…SPDC. A Glycyl lysine isopeptide (Lys-Gly) (interchain with G-Cter in SUMO2) cross-link involves residue K411. Residues 454–463 are compositionally biased toward low complexity; the sequence is SQSSESFQFQ. Residues 464 to 494 show a composition bias toward pro residues; it reads PPLPPDTPPLPRGTPPPIFTPPLPKGTPPLT. Residues T470, T477, T483, and T490 each carry the phosphothreonine modification. Residues 514 to 538 are a coiled coil; the sequence is TLEELEEQQRRIWAALEQAESLNSD. Over residues 547 to 557 the composition is skewed to polar residues; that stretch reads LTGNSVASSPC. A Phosphothreonine modification is found at T575. The residue at position 596 (S596) is a Phosphoserine. Phosphothreonine is present on T645. Residues S646, S655, and S692 each carry the phosphoserine modification. The MTREX binding stretch occupies residues 656–704; that stretch reads PIPDMSKFATGITPFEFENMAESTGMYLRIRSLLKNSPRNQQKNKKASE.

This sequence belongs to the ZCCHC8 family. In terms of assembly, component of a nuclear TRAMP-like complex, an ATP-dependent exosome regulatory complex consisting of a helicase (MTREX), an oligadenylate polymerase (TENT4B or TENT4A), and a substrate specific RNA-binding factor (ZCCHC7 or ZCCHC8). Several TRAMP-like complexes exist with specific compositions and are associated with nuclear, or nucleolar RNA exosomes. Identified in the spliceosome C complex. Component of the nuclear exosome targeting (NEXT) complex composed of MTREX, ZCCHC8, and RBM7 that directs a subset of non-coding short-lived RNAs for exosomal degradation. Interacts with proteins involved in RNA processing and degradation such as MTREX and RBM7; interaction with MTREX enhances MTREX RNA helicase activity and bridges between RBM7 and MTREX. Interacts with TERC, the telomerase RNA component. Post-translationally, phosphorylation at Thr-490 by GSK3 is triggered in cells entering mitosis.

The protein resides in the nucleus. Its subcellular location is the nucleoplasm. Scaffolding subunit of the trimeric nuclear exosome targeting (NEXT) complex that is involved in the surveillance and turnover of aberrant transcripts and non-coding RNAs. NEXT functions as an RNA exosome cofactor that directs a subset of non-coding short-lived RNAs for exosomal degradation. May be involved in pre-mRNA splicing. It is required for 3'-end maturation of telomerase RNA component (TERC), TERC 3'-end targeting to the nuclear RNA exosome, and for telomerase function. The sequence is that of Zinc finger CCHC domain-containing protein 8 (ZCCHC8) from Pongo abelii (Sumatran orangutan).